The primary structure comprises 298 residues: Aspartate carbamoyltransferase catalytic subunit (298 aa).

Carbamoyl phosphate is bound by residues Arg50 and Thr51. Lys79 is an L-aspartate binding site. 3 residues coordinate carbamoyl phosphate: Arg100, His128, and Gln131. L-aspartate contacts are provided by Arg160 and Arg221. Residues Leu260 and Pro261 each coordinate carbamoyl phosphate.

It belongs to the aspartate/ornithine carbamoyltransferase superfamily. ATCase family. In terms of assembly, heterooligomer of catalytic and regulatory chains.

It catalyses the reaction carbamoyl phosphate + L-aspartate = N-carbamoyl-L-aspartate + phosphate + H(+). It participates in pyrimidine metabolism; UMP biosynthesis via de novo pathway; (S)-dihydroorotate from bicarbonate: step 2/3. In terms of biological role, catalyzes the condensation of carbamoyl phosphate and aspartate to form carbamoyl aspartate and inorganic phosphate, the committed step in the de novo pyrimidine nucleotide biosynthesis pathway. The protein is Aspartate carbamoyltransferase catalytic subunit of Methanospirillum hungatei JF-1 (strain ATCC 27890 / DSM 864 / NBRC 100397 / JF-1).